The primary structure comprises 380 residues: MSGAGVAAGTRPPSSPTPGSRRRRQRPSVGVQSLRPQSPQLRQSDPQKRNLDLEKSLQFLQQQHSEMLAKLHEEIEHLKRENKDLRYKLIMNQTSQKKDGPSGNHLSRASAPLGARWVCINGVWVEPGGPSPARLKEGSSRTHRPGGKHGRLAGGSADTVRSPADSLSTSSFQSVKSISNSGKARPQPGSFNKQDSKADVPQKADLEEEPLLHNSKLDKVPGVQGQARKEKAEASNAGAACMGNSQHQGRQMGAAAHPPMILPLPLRKPTTLRQCEVLIRELWNTNLLQTQELQHLKSLLEGSQRPQAVPEEASFPRDQEATHFPKVSTKSLSKKCLLLSPPVAERAILPALKQTPKNNFAERQKRLQAMQKRRLHRSVL.

Disordered regions lie at residues 1 to 51, 89 to 108, and 128 to 202; these read MSGA…KRNL, LIMN…HLSR, and GGPS…DVPQ. Over residues 34–44 the composition is skewed to polar residues; it reads LRPQSPQLRQS. Positions 47–93 form a coiled coil; sequence QKRNLDLEKSLQFLQQQHSEMLAKLHEEIEHLKRENKDLRYKLIMNQ. Residues 141–151 are compositionally biased toward basic residues; sequence RTHRPGGKHGR. Residues 165 to 182 show a composition bias toward polar residues; the sequence is DSLSTSSFQSVKSISNSG.

The sequence is that of Coiled-coil domain-containing protein 74B (CCDC74B) from Homo sapiens (Human).